Here is a 247-residue protein sequence, read N- to C-terminus: Uridylate kinase (247 aa).

15–18 contributes to the ATP binding site; the sequence is KLSG. The segment at 23–28 is involved in allosteric activation by GTP; the sequence is GDEGFG. G57 lines the UMP pocket. Residues G58 and R62 each coordinate ATP. UMP contacts are provided by residues D77 and 138–145; that span reads TGNPFFTT. Positions 165, 171, and 174 each coordinate ATP.

It belongs to the UMP kinase family. Homohexamer.

The protein resides in the cytoplasm. The catalysed reaction is UMP + ATP = UDP + ADP. Its pathway is pyrimidine metabolism; CTP biosynthesis via de novo pathway; UDP from UMP (UMPK route): step 1/1. Allosterically activated by GTP. Inhibited by UTP. In terms of biological role, catalyzes the reversible phosphorylation of UMP to UDP. The sequence is that of Uridylate kinase from Saccharophagus degradans (strain 2-40 / ATCC 43961 / DSM 17024).